Here is a 223-residue protein sequence, read N- to C-terminus: MOB-like protein phocein (223 aa).

Positions 1–23 (MTAATENRTVRRNGPGTKRADWN) are disordered. 4 residues coordinate Zn(2+): Cys-92, Cys-97, His-169, and His-174.

The protein belongs to the MOB1/phocein family.

It is found in the cytoplasm. The protein resides in the perinuclear region. It localises to the membrane. The protein localises to the golgi apparatus. Its subcellular location is the golgi stack membrane. In terms of biological role, may play a role in membrane trafficking, specifically in membrane budding reactions. In Caenorhabditis elegans, this protein is MOB-like protein phocein.